Reading from the N-terminus, the 99-residue chain is Integration host factor subunit alpha (99 aa).

It belongs to the bacterial histone-like protein family. As to quaternary structure, heterodimer of an alpha and a beta chain.

Its function is as follows. This protein is one of the two subunits of integration host factor, a specific DNA-binding protein that functions in genetic recombination as well as in transcriptional and translational control. This is Integration host factor subunit alpha from Enterobacter sp. (strain 638).